Consider the following 531-residue polypeptide: Arginine--tRNA ligase (531 aa).

A 'HIGH' region motif is present at residues 113 to 123 (ANPTGPLHIGH).

It belongs to the class-I aminoacyl-tRNA synthetase family. Monomer.

The protein localises to the cytoplasm. It catalyses the reaction tRNA(Arg) + L-arginine + ATP = L-arginyl-tRNA(Arg) + AMP + diphosphate. This is Arginine--tRNA ligase from Campylobacter fetus subsp. fetus (strain 82-40).